Consider the following 62-residue polypeptide: Small ribosomal subunit protein eS27 (62 aa).

Residues C17, C20, C36, and C39 each contribute to the Zn(2+) site. Residues 17 to 39 (CNDCENEQIIFGSASRKITCVVC) form a C4-type zinc finger.

Belongs to the eukaryotic ribosomal protein eS27 family. In terms of assembly, part of the 30S ribosomal subunit. Zn(2+) serves as cofactor.

This Methanosarcina mazei (strain ATCC BAA-159 / DSM 3647 / Goe1 / Go1 / JCM 11833 / OCM 88) (Methanosarcina frisia) protein is Small ribosomal subunit protein eS27.